A 377-amino-acid polypeptide reads, in one-letter code: 2-aminoethylphosphonate--pyruvate transaminase (377 aa).

Lys194 carries the post-translational modification N6-(pyridoxal phosphate)lysine.

Belongs to the class-V pyridoxal-phosphate-dependent aminotransferase family. PhnW subfamily. As to quaternary structure, homodimer. It depends on pyridoxal 5'-phosphate as a cofactor.

The enzyme catalyses (2-aminoethyl)phosphonate + pyruvate = phosphonoacetaldehyde + L-alanine. Its function is as follows. Involved in phosphonate degradation. The sequence is that of 2-aminoethylphosphonate--pyruvate transaminase from Cupriavidus taiwanensis (strain DSM 17343 / BCRC 17206 / CCUG 44338 / CIP 107171 / LMG 19424 / R1) (Ralstonia taiwanensis (strain LMG 19424)).